Reading from the N-terminus, the 375-residue chain is MGFPRILSKNNKIYTKLGEFCLSGDSFWIVCHTCQEELQTQDQFWKHIQDEHNFLHGVAKEHSRTSSYCLTDVEAAAATSGATTSQGAGSVTSVTVPLALYHCSTKYSEDDQREMDIHEAQQQQHQQQQQHQQQQQLQQQQQRDVAKELAELHANAVAVASAAAAAANESSTRSSSGIDIKIEPPCLTLPPEMQAAAAASNATIYHLPQLGPAAVPPPPPTTGFVSANVSTSTTVSTTPPNVTGSHSVMQQQAGVLTGSGLSTLSMSVGPSTAMAAALLSTQELPKDSNSTTASAGSAVSSDDGERWYICDYETCGLKFKYKSRMELHRVVHSKERRFNCELCSASFKQSCNLSTHRKKKHALRGIKSEILPQRF.

The C2H2-type 1 zinc finger occupies 29–52; it reads IVCHTCQEELQTQDQFWKHIQDEH. The segment covering 110-119 has biased composition (basic and acidic residues); sequence DDQREMDIHE. The interval 110–142 is disordered; that stretch reads DDQREMDIHEAQQQQHQQQQQHQQQQQLQQQQQ. Residues 121–142 are compositionally biased toward low complexity; that stretch reads QQQQHQQQQQHQQQQQLQQQQQ. 2 consecutive C2H2-type zinc fingers follow at residues 308 to 332 and 338 to 361; these read YICDYETCGLKFKYKSRMELHRVVH and FNCELCSASFKQSCNLSTHRKKKH.

It localises to the nucleus. In terms of biological role, may be a transcription factor for genes having (A+T) stretches in their promoter and/or enhancer regions. Binds to AT rich DNA. The protein is AT-rich binding protein of Drosophila pseudoobscura pseudoobscura (Fruit fly).